The chain runs to 351 residues: Nuclear inhibitor of protein phosphatase 1 (351 aa).

The tract at residues 1–142 (MAAAANSGSS…LPSAVKGDEK (142 aa)) is interaction with CDC5L, SF3B1 and MELK. The 53-residue stretch at 49 to 101 (YLFGRNPDLCDFTIDHQSCSRVHAALVYHKHLKRVFLIDLNSTHGTFLGHIRL) folds into the FHA domain. The interaction with EED stretch occupies residues 143–224 (MGGEDDELKG…VDPSVGRFRN (82 aa)). Thr-161 bears the Phosphothreonine mark. Phosphoserine is present on residues Ser-178 and Ser-199. 2 consecutive short sequence motifs (nuclear localization signal) follow at residues 185–209 (GNLD…DDEI) and 210–240 (INPE…RVEG). The segment at 191–200 (RPKRKRKNSR) is involved in PP-1 inhibition. The interval 200 to 203 (RVTF) is involved in PP-1 binding. Ser-204 carries the post-translational modification Phosphoserine. A Phosphoserine modification is found at Ser-249. Tyr-264 carries the phosphotyrosine; by LYN; in vitro modification. The interaction with EED stretch occupies residues 310 to 329 (AVNMNPAPNPAVYNPEAVNE). The disordered stretch occupies residues 316 to 351 (APNPAVYNPEAVNEPKKKKYAKEAWPGKKPTPSLLI). The tract at residues 330-351 (PKKKKYAKEAWPGKKPTPSLLI) is RNA-binding. The interval 331-337 (KKKKYAK) is involved in PP-1 inhibition. Tyr-335 carries the phosphotyrosine modification.

In terms of assembly, interacts with phosphorylated CDC5L, SF3B1 and MELK. Interacts with EED, in a nucleic acid-stimulated manner. Part of a complex consisting of PPP1R8, EED, HDAC2 and PP-1. Part of the spliceosome. Interacts with PPP1CA, PPP1CB and PPP1CC. It depends on Mg(2+) as a cofactor. In terms of processing, may be inactivated by phosphorylation on Ser-199 or Ser-204. Phosphorylated by Lyn in vitro on Tyr-264, and also on Tyr-335 in the presence of RNA. As to expression, ubiquitously expressed, with highest levels in heart and skeletal muscle, followed by brain, placenta, lung, liver and pancreas. Less abundant in kidney. The concentration and ratio between isoforms is cell-type dependent. Isoform Alpha (&gt;90%) and isoform Beta were found in brain, heart and kidney. Isoform Gamma is mainly found in B-cells and T-lymphocytes, and has been found in 293 embryonic kidney cells.

The protein resides in the nucleus. It localises to the nucleus speckle. The protein localises to the cytoplasm. Functionally, inhibitor subunit of the major nuclear protein phosphatase-1 (PP-1). It has RNA-binding activity but does not cleave RNA and may target PP-1 to RNA-associated substrates. May also be involved in pre-mRNA splicing. Binds DNA and might act as a transcriptional repressor. Seems to be required for cell proliferation. In terms of biological role, isoform Gamma is a site-specific single-strand endoribonuclease that cleaves single strand RNA 3' to purines and pyrimidines in A+U-rich regions. It generates 5'-phosphate termini at the site of cleavage. This isoform does not inhibit PP-1. May be implicated in mRNA splicing. The polypeptide is Nuclear inhibitor of protein phosphatase 1 (PPP1R8) (Homo sapiens (Human)).